Here is a 161-residue protein sequence, read N- to C-terminus: Nucleotide-binding protein Gura_0717 (161 aa).

Belongs to the YajQ family.

In terms of biological role, nucleotide-binding protein. This is Nucleotide-binding protein Gura_0717 from Geotalea uraniireducens (strain Rf4) (Geobacter uraniireducens).